The chain runs to 122 residues: Large ribosomal subunit protein uL18 (122 aa).

Positions 1–22 (MDKNKKLQSKRLRRRRHVRNKL) are enriched in basic residues. Residues 1–25 (MDKNKKLQSKRLRRRRHVRNKLRGS) are disordered.

This sequence belongs to the universal ribosomal protein uL18 family. In terms of assembly, part of the 50S ribosomal subunit; part of the 5S rRNA/L5/L18/L25 subcomplex. Contacts the 5S and 23S rRNAs.

In terms of biological role, this is one of the proteins that bind and probably mediate the attachment of the 5S RNA into the large ribosomal subunit, where it forms part of the central protuberance. This is Large ribosomal subunit protein uL18 from Rhodopirellula baltica (strain DSM 10527 / NCIMB 13988 / SH1).